A 62-amino-acid chain; its full sequence is Defensin-like protein A (62 aa).

The N-terminal stretch at methionine 1–alanine 26 is a signal peptide. A disulfide bridge links cysteine 42 with cysteine 52.

This sequence belongs to the DEFL family.

It is found in the secreted. In terms of biological role, truncated and inactivated form of SCRA, a protein involved in male-mediated self-incompatibility when active. Most A.thaliana cultivars contain such an inactive form and thus, are self-fertiles. The protein is Defensin-like protein A (SCRA) of Arabidopsis thaliana (Mouse-ear cress).